Reading from the N-terminus, the 344-residue chain is Arginine N-succinyltransferase (344 aa).

A succinyl-CoA-binding site is contributed by Leu-125. His-229 serves as the catalytic Proton donor.

The protein belongs to the arginine N-succinyltransferase family.

The enzyme catalyses succinyl-CoA + L-arginine = N(2)-succinyl-L-arginine + CoA + H(+). Its pathway is amino-acid degradation; L-arginine degradation via AST pathway; L-glutamate and succinate from L-arginine: step 1/5. Catalyzes the transfer of succinyl-CoA to arginine to produce N(2)-succinylarginine. This is Arginine N-succinyltransferase from Shigella flexneri.